A 376-amino-acid chain; its full sequence is DNA replication and repair protein RecF (376 aa).

30–37 (GHNGVGKT) contacts ATP.

It belongs to the RecF family.

The protein localises to the cytoplasm. In terms of biological role, the RecF protein is involved in DNA metabolism; it is required for DNA replication and normal SOS inducibility. RecF binds preferentially to single-stranded, linear DNA. It also seems to bind ATP. In Salinispora arenicola (strain CNS-205), this protein is DNA replication and repair protein RecF.